Here is a 343-residue protein sequence, read N- to C-terminus: Protein RecA (343 aa).

64–71 is a binding site for ATP; sequence GPESSGKT.

Belongs to the RecA family.

It is found in the cytoplasm. Can catalyze the hydrolysis of ATP in the presence of single-stranded DNA, the ATP-dependent uptake of single-stranded DNA by duplex DNA, and the ATP-dependent hybridization of homologous single-stranded DNAs. It interacts with LexA causing its activation and leading to its autocatalytic cleavage. The protein is Protein RecA of Bacillus cereus (strain B4264).